The sequence spans 569 residues: Proline--tRNA ligase (569 aa).

The protein belongs to the class-II aminoacyl-tRNA synthetase family. ProS type 1 subfamily. Homodimer.

The protein localises to the cytoplasm. The catalysed reaction is tRNA(Pro) + L-proline + ATP = L-prolyl-tRNA(Pro) + AMP + diphosphate. In terms of biological role, catalyzes the attachment of proline to tRNA(Pro) in a two-step reaction: proline is first activated by ATP to form Pro-AMP and then transferred to the acceptor end of tRNA(Pro). As ProRS can inadvertently accommodate and process non-cognate amino acids such as alanine and cysteine, to avoid such errors it has two additional distinct editing activities against alanine. One activity is designated as 'pretransfer' editing and involves the tRNA(Pro)-independent hydrolysis of activated Ala-AMP. The other activity is designated 'posttransfer' editing and involves deacylation of mischarged Ala-tRNA(Pro). The misacylated Cys-tRNA(Pro) is not edited by ProRS. This chain is Proline--tRNA ligase, found in Campylobacter jejuni (strain RM1221).